The sequence spans 2213 residues: Sortilin-related receptor (2213 aa).

The signal sequence occupies residues 1–28; that stretch reads MATRSSRRESRLPFLFTLVALLPPGALC. Positions 29 to 81 are cleaved as a propeptide — removed in mature form; sequence EVWTRTLHGGRAPLPQERGFRVVQGDPRELRLWERGDARGASRADEKPLRRRR. Positions 63-65 match the Cell attachment site motif; sequence RGD. At 82-2136 the chain is on the lumenal side; the sequence is SAALQPEPIK…MQAARSTDVA (2055 aa). An N-linked (GlcNAc...) asparagine glycan is attached at N99. Position 114 is a phosphoserine (S114). The BNR 1 repeat unit spans residues 136 to 147; sequence YVSYDYGKSFNK. A glycan (N-linked (GlcNAc...) asparagine) is linked at N158. The stretch at 232-243 is one BNR 2 repeat; the sequence is WKSDDFGQTWIM. N-linked (GlcNAc...) asparagine glycans are attached at residues N368 and N430. 3 BNR repeats span residues 441 to 452, 521 to 532, and 562 to 573; these read VITFDKGGTWEF, YISSSAGARWRE, and KYSTNEGETWKA. N-linked (GlcNAc...) asparagine glycans are attached at residues N616, N674, N817, and N870. 5 LDL-receptor class B repeats span residues 799–842, 843–886, 887–929, 930–971, and 972–1012; these read NCLY…EPLS, QLLY…VPQE, GIMF…SVDD, QWIY…FKNE, and IYWD…FYKG. Residues 1025–1071 enclose the EGF-like domain; the sequence is CSLLCLPRANNSKSCRCPDGVASSVLPSGDLMCDCPKGYELKNNTCV. N1034 and N1067 each carry an N-linked (GlcNAc...) asparagine glycan. LDL-receptor class A domains lie at 1075 to 1113, 1114 to 1154, 1155 to 1193, 1196 to 1235, 1237 to 1271, 1272 to 1316, 1322 to 1360, 1365 to 1404, and 1416 to 1454; these read DTCL…NCPT, TICD…HCEM, HQCR…NCTA, HTCE…ANCE, KCNG…QHCE, PLCT…GCSR, KVCD…NCEN, PNCS…DCGD, and STCL…ACPS. 21 disulfides stabilise this stretch: C1077-C1089, C1084-C1102, C1096-C1111, C1116-C1130, C1124-C1143, C1137-C1152, C1157-C1169, C1164-C1182, C1176-C1191, C1198-C1210, C1205-C1223, C1217-C1234, C1238-C1248, C1243-C1261, C1255-C1270, C1274-C1288, C1282-C1301, C1295-C1314, C1324-C1336, C1331-C1349, and C1343-C1358. N-linked (GlcNAc...) asparagine glycosylation occurs at N1163. An N-linked (GlcNAc...) asparagine glycan is attached at N1190. N-linked (GlcNAc...) asparagine glycosylation occurs at N1245. A glycan (N-linked (GlcNAc...) asparagine) is linked at N1366. 6 cysteine pairs are disulfide-bonded: C1367–C1380, C1375–C1393, C1387–C1402, C1418–C1430, C1425–C1443, and C1437–C1452. The N-linked (GlcNAc...) asparagine glycan is linked to N1457. LDL-receptor class A domains lie at 1468 to 1507 and 1511 to 1550; these read GRCD…NCPT and LTCM…ACSD. 6 disulfides stabilise this stretch: C1470-C1483, C1477-C1496, C1490-C1505, C1513-C1526, C1520-C1539, and C1533-C1548. Fibronectin type-III domains lie at 1556–1648, 1652–1744, 1748–1843, 1842–1926, 1933–2028, and 2029–2117; these read KVQN…TPEG, APQN…TVKG, PPPN…VRPP, PPAP…VVKM, PPRH…APDA, and LKII…LYDE. N-linked (GlcNAc...) asparagine glycans are attached at residues N1569, N1607, N1705, N1732, N1808, N1853, N1893, N1985, N2009, N2053, N2068, N2075, and N2091. Residues 2137–2157 form a helical membrane-spanning segment; it reads AVVVPILFLILLSLGVGFAIL. Topologically, residues 2158–2213 are cytoplasmic; the sequence is YTKHRRLQSSFTAFANSHYSSRLGSAIFSSGDDLGEDDEDAPMITGFSDDVPMVIA. The Potential nuclear localization signal for the C-terminal fragment generated by PSEN1 motif lies at 2160–2163; the sequence is KHRR. The short motif at 2171-2176 is the Endocytosis signal element; it reads FANSHY. Positions 2189 to 2213 are required for efficient Golgi apparatus - endosome sorting; it reads DDLGEDDEDAPMITGFSDDVPMVIA. The interval 2200–2213 is required for interaction with GGA1 and GGA2; the sequence is MITGFSDDVPMVIA. S2205 is subject to Phosphoserine; by ROCK2. The DXXLL motif involved in the interaction with GGA1 motif lies at 2207–2211; it reads DVPMV.

Belongs to the VPS10-related sortilin family. SORL1 subfamily. As to quaternary structure, after maturation cleavage, interacts (via N-terminus) with its own propeptide; this interaction prevents interaction with other ligands, including CRLF1, GDNF, GFRA1, IL6 and IL6R. Interacts (via N-terminal ectodomain) with APP, forming a 1:1 stoichiometric complex; this interaction retains APP in the trans-Golgi network and reduces processing into soluble APP-alpha and amyloid-beta peptides. Also interacts with APP C-terminal fragment C99 and with Abeta40. Interacts with beta-secretase BACE1/BACE; this interaction may affect BACE1-binding to APP and hence reduce BACE1-dependent APP cleavage. Interacts with LRPAP1/RAP. Interacts (via C-terminal cytosolic domain) with GGA1 and GGA2 (via N-terminal VHS domain). Interacts with PACS1. May interact (via the N-terminal ectodomain) with the morphogenetic neuropeptide, also called head activator or HA; this interaction is impaired in the presence of propeptide. Interacts with neurotensin/NTS. Interacts (via the N-terminal ectodomain) with PDGFB homodimer. Interacts (via N-terminal ectodomain) with the uPA receptor PLAUR. Interacts with uPA/PLAU and PAI1/SERPINE1, either individually or in complex with each other, leading to endocytosis. Also interacts with PAI1/SERPINE1 in complex with tPA/PLAT. Interacts (via C-terminus) with AP-1 and AP-2 complexes. Interacts with BMPR1A and BMPR1B. Interacts with lipoprotein lipase LPL; this interaction is optimal in slightly acidic conditions. Interacts (via N-terminal ectodomain) with GDNF (via propeptide) and GDNF receptor alpha-1/GFRA1, either individually or in complex with each other. The interaction with GDNF occurs mostly intracellularly. Also interacts with other GDNF receptor alpha family members, including GFRA2, GFRA3 and GFRA4. Interacts with the insulin receptor INSR; this interaction strongly increases the surface exposure of INSR. Interacts (via cytosolic C-terminus) with STK39/SPAK. Interacts (via N-terminal ectodomain) with the heterodimeric complex CRLF1-CLC; within this complex, the interaction is mediated predominantly by the CRLF1 moiety. Interacts with CNTFR, as well as with the tripartite signaling complex formed by CRLF1, CLC and CNTFR. Interacts (via N-terminal ectodomain) with IL6; this interaction leads to IL6 internalization and lysosomal degradation. Binding of SOLRL1 secreted N-terminal ectodomain to IL6 may increase IL6 trans signaling. Interacts with secreted IL6R; this interaction leads to IL6R internalization. Also interacts with transmembrane IL6R; this interaction does not affect subcellular location. Interacts with APOE. Interacts with apolipoprotein E-rich beta-VLDL. Interacts with APOA5; this interaction leads to APOA5 internalization and is abolished by heparin. Interaction with APOA5 results in enhanced binding to chylomicrons. Interacts with ROCK2. Interacts (via cytosolic C-terminus) with PPP3CB/calcineurin A beta. Interacts with NTRK2/TRKB; this interaction facilitates NTRK2 trafficking between synaptic plasma membranes, postsynaptic densities and cell soma, hence positively regulates BDNF signaling. Interacts (via cytosolic C-terminus) with HSPA12A in an ADP-dependent manner; this interaction affects SORL1 internalization and subcellular localization. Interacts (via N-terminal ectodomain) with ERBB2/HER2. In terms of processing, within the Golgi apparatus, the propeptide may be cleaved off by FURIN or a furin-like protease. After cleavage, the propeptide interacts with the mature protein N-terminus, preventing the association with other ligands. At the cell surface, partially subjected to proteolytic shedding that releases the ectodomain in the extracellular milieu. The shedding may be catalyzed by ADAM17/TACE. Following shedding, PSEN1/presenilin-1 cleaves the remaining transmembrane fragment and catalyzes the release of a C-terminal fragment in the cytosol and of a soluble N-terminal beta fragment in the extracellular milieu. The C-terminal cytosolic fragment localizes to the nucleus. Post-translationally, phosphorylation at Ser-2205 facilitates the interaction with GGA1. In terms of tissue distribution, expressed in brain, in particular the hippocampus, dentate gyrus, and cerebral cortex (at protein level). Also detected in liver, adrenal glands, pancreas and testis. Expressed in smooth muscle cells, predominantly during proliferation.

It localises to the golgi apparatus membrane. The protein resides in the golgi apparatus. Its subcellular location is the trans-Golgi network membrane. It is found in the endosome membrane. The protein localises to the early endosome membrane. It localises to the recycling endosome membrane. The protein resides in the endoplasmic reticulum membrane. Its subcellular location is the endosome. It is found in the multivesicular body membrane. The protein localises to the cell membrane. It localises to the cytoplasmic vesicle. The protein resides in the secretory vesicle membrane. Its subcellular location is the secreted. In terms of biological role, sorting receptor that directs several proteins to their correct location within the cell. Along with AP-1 complex, involved Golgi apparatus - endosome sorting. Sorting receptor for APP, regulating its intracellular trafficking and processing into amyloidogenic-beta peptides. Retains APP in the trans-Golgi network, hence preventing its transit through late endosomes where amyloid beta peptides Abeta40 and Abeta42 are generated. May also sort newly produced amyloid-beta peptides to lysosomes for catabolism. Does not affect APP trafficking from the endoplasmic reticulum to Golgi compartments. Sorting receptor for the BDNF receptor NTRK2/TRKB that facilitates NTRK2 trafficking between synaptic plasma membranes, postsynaptic densities and cell soma, hence positively regulates BDNF signaling by controlling the intracellular location of its receptor. Sorting receptor for GDNF that promotes GDNF regulated, but not constitutive secretion. Sorting receptor for the GDNF-GFRA1 complex, directing it from the cell surface to endosomes. GDNF is then targeted to lysosomes and degraded, while its receptor GFRA1 recycles back to the cell membrane, resulting in a GDNF clearance pathway. The SORL1-GFRA1 complex further targets RET for endocytosis, but not for degradation, affecting GDNF-induced neurotrophic activities. Sorting receptor for ERBB2/HER2. Regulates ERBB2 subcellular distribution by promoting its recycling after internalization from endosomes back to the plasma membrane, hence stimulating phosphoinositide 3-kinase (PI3K)-dependent ERBB2 signaling. Sorting receptor for lipoprotein lipase LPL. Promotes LPL localization to endosomes and later to the lysosomes, leading to degradation of newly synthesized LPL. Potential sorting receptor for APOA5, inducing APOA5 internalization to early endosomes, then to late endosomes, wherefrom a portion is sent to lysosomes and degradation, another portion is sorted to the trans-Golgi network. Sorting receptor for the insulin receptor INSR. Promotes recycling of internalized INSR via the Golgi apparatus back to the cell surface, thereby preventing lysosomal INSR catabolism, increasing INSR cell surface expression and strengthening insulin signal reception in adipose tissue. Does not affect INSR internalization. Plays a role in renal ion homeostasis, controlling the phospho-regulation of SLC12A1/NKCC2 by STK39/SPAK kinase and PPP3CB/calcineurin A beta phosphatase, possibly through intracellular sorting of STK39 and PPP3CB. Stimulates, via the N-terminal ectodomain, the proliferation and migration of smooth muscle cells, possibly by increasing cell surface expression of the urokinase receptor uPAR/PLAUR. This may promote extracellular matrix proteolysis and hence facilitate cell migration. By acting on the migration of intimal smooth muscle cells, may accelerate intimal thickening following vascular injury. Promotes adhesion of monocytes. Stimulates proliferation and migration of monocytes/macrophages. Through its action on intimal smooth muscle cells and macrophages, may accelerate intimal thickening and macrophage foam cell formation in the process of atherosclerosis. Regulates hypoxia-enhanced adhesion of hematopoietic stem and progenitor cells to the bone marrow stromal cells via a PLAUR-mediated pathway. This function is mediated by the N-terminal ectodomain. Metabolic regulator, which functions to maintain the adequate balance between lipid storage and oxidation in response to changing environmental conditions, such as temperature and diet. The N-terminal ectodomain negatively regulates adipose tissue energy expenditure, acting through the inhibition the BMP/Smad pathway. May regulate signaling by the heterodimeric neurotrophic cytokine CLCF1-CRLF1 bound to the CNTFR receptor by promoting the endocytosis of the tripartite complex CLCF1-CRLF1-CNTFR and lysosomal degradation. May regulate IL6 signaling, decreasing cis signaling, possibly by interfering with IL6-binding to membrane-bound IL6R, while up-regulating trans signaling via soluble IL6R. This chain is Sortilin-related receptor (SORL1), found in Oryctolagus cuniculus (Rabbit).